The chain runs to 322 residues: Putative nickel/cobalt efflux system HI_1248 (322 aa).

Transmembrane regions (helical) follow at residues 7–27 (GLVL…WFFL), 54–74 (AGTT…LGPG), 100–120 (LSSL…VVVL), 137–157 (TALL…LRAY), 228–248 (IFVL…LAVL), and 294–314 (LIAG…TTIS).

It belongs to the NiCoT transporter (TC 2.A.52) family.

The protein resides in the cell membrane. Its function is as follows. Efflux system for nickel and cobalt. In Haemophilus influenzae (strain ATCC 51907 / DSM 11121 / KW20 / Rd), this protein is Putative nickel/cobalt efflux system HI_1248.